Reading from the N-terminus, the 479-residue chain is uncharacterized protein (479 aa).

A run of 10 helical transmembrane segments spans residues 11–31, 43–63, 90–110, 151–171, 195–215, 223–243, 274–294, 295–315, 328–348, and 447–467; these read ILMA…LSLI, IVGL…AIAV, GTTW…ITGL, SGGI…SDPE, IFLT…PILG, WFLA…LICY, KALS…NSLH, INAT…SIVT, TLVW…SGFF, and WWIT…TIGM.

It belongs to the SLC13A/DASS transporter (TC 2.A.47) family. DIT1 subfamily.

The protein localises to the cell inner membrane. This is an uncharacterized protein from Haemophilus influenzae (strain ATCC 51907 / DSM 11121 / KW20 / Rd).